The chain runs to 609 residues: Sulfite reductase [NADPH] flavoprotein alpha-component (609 aa).

Residues 72-210 (ITLISASQTG…LAAQWRRQLV (139 aa)) form the Flavodoxin-like domain. FMN is bound by residues 78–83 (SQTGNA) and 125–128 (STQG). The region spanning 244-458 (SSPLQATFAV…IEHNDNFRLP (215 aa)) is the FAD-binding FR-type domain. Residues T332, Q366, 396 to 399 (RLYS), 414 to 416 (TVG), Y420, and 429 to 432 (GGAS) contribute to the FAD site. NADP(+) contacts are provided by residues 529–530 (SR), 535–539 (KIYVQ), and D571. Position 609 (Y609) interacts with FAD.

It belongs to the NADPH-dependent sulphite reductase flavoprotein subunit CysJ family. The protein in the N-terminal section; belongs to the flavodoxin family. This sequence in the C-terminal section; belongs to the flavoprotein pyridine nucleotide cytochrome reductase family. As to quaternary structure, alpha(8)-beta(8). The alpha component is a flavoprotein, the beta component is a hemoprotein. The cofactor is FAD. It depends on FMN as a cofactor.

The enzyme catalyses hydrogen sulfide + 3 NADP(+) + 3 H2O = sulfite + 3 NADPH + 4 H(+). It participates in sulfur metabolism; hydrogen sulfide biosynthesis; hydrogen sulfide from sulfite (NADPH route): step 1/1. Component of the sulfite reductase complex that catalyzes the 6-electron reduction of sulfite to sulfide. This is one of several activities required for the biosynthesis of L-cysteine from sulfate. The flavoprotein component catalyzes the electron flow from NADPH -&gt; FAD -&gt; FMN to the hemoprotein component. The chain is Sulfite reductase [NADPH] flavoprotein alpha-component from Pectobacterium atrosepticum (strain SCRI 1043 / ATCC BAA-672) (Erwinia carotovora subsp. atroseptica).